We begin with the raw amino-acid sequence, 378 residues long: Small ribosomal subunit protein bS1 (378 aa).

S1 motif domains are found at residues 1 to 66 (ETVT…VSRR), 87 to 155 (GMEV…LGLK), 172 to 242 (GTKL…LGLK), 259 to 329 (GDRV…LGVK), and 346 to 378 (GAIVTGKVTAVDAKGATVELTLGVEGYLRASEA).

It belongs to the bacterial ribosomal protein bS1 family.

Binds mRNA; thus facilitating recognition of the initiation point. It is needed to translate mRNA with a short Shine-Dalgarno (SD) purine-rich sequence. This chain is Small ribosomal subunit protein bS1 (rpsA), found in Providencia sp.